The following is a 66-amino-acid chain: UPF0337 protein BA_0987/GBAA_0987/BAS0923 (66 aa).

The segment at 1 to 22 (MSESGLKEQITGKVEKTKGQVK) is disordered. Basic and acidic residues predominate over residues 13-22 (KVEKTKGQVK).

Belongs to the UPF0337 (CsbD) family.

This is UPF0337 protein BA_0987/GBAA_0987/BAS0923 from Bacillus anthracis.